Here is a 364-residue protein sequence, read N- to C-terminus: Monocarboxylate 2-oxoacid-binding periplasmic protein all3028 (364 aa).

The signal sequence occupies residues 1 to 26 (MKRREVLNTAAIATATTALVSCTQTN). Substrate contacts are provided by residues 103-104 (YY), glutamine 160, and arginine 181. Glutamine 160 is a binding site for Na(+). Na(+) is bound by residues glutamate 218, tryptophan 219, and glutamate 244.

It belongs to the bacterial solute-binding protein 7 family. Homodimer. The complex comprises the extracytoplasmic solute receptor protein all3028, and the two putative transmembrane proteins alr3026 and alr3027.

It is found in the periplasm. Pyruvate uptake inhibited by 2-oxobutyrate, 2-oxovalerate, 2-oxoisovalerate, 2-oxoisocaproate and 2-oxo-3-methylvalerate. Functionally, part of the tripartite ATP-independent periplasmic (TRAP) transport system involved in the uptake of monocarboxylate 2-oxoacids. This protein specifically binds monocarboxylate 2-oxoacids including pyruvate, 2-oxobutyrate, 2-oxovalerate, 2-oxoisovalerate, 2-oxoisocaproate and 2-oxo-3-methylvalerate. Is not able to bind mannitol. The protein is Monocarboxylate 2-oxoacid-binding periplasmic protein all3028 of Nostoc sp. (strain PCC 7120 / SAG 25.82 / UTEX 2576).